The following is a 149-amino-acid chain: Small ribosomal subunit protein eS19 (149 aa).

It belongs to the eukaryotic ribosomal protein eS19 family.

The polypeptide is Small ribosomal subunit protein eS19 (RPS19) (Mya arenaria (Soft-shell clam)).